A 233-amino-acid polypeptide reads, in one-letter code: Glucosamine-6-phosphate deaminase (233 aa).

Catalysis depends on Asp62, which acts as the Proton acceptor; for enolization step. Asn128 (for ring-opening step) is an active-site residue. The active-site Proton acceptor; for ring-opening step is His130. Glu135 (for ring-opening step) is an active-site residue.

It belongs to the glucosamine/galactosamine-6-phosphate isomerase family. NagB subfamily.

It catalyses the reaction alpha-D-glucosamine 6-phosphate + H2O = beta-D-fructose 6-phosphate + NH4(+). It participates in amino-sugar metabolism; N-acetylneuraminate degradation; D-fructose 6-phosphate from N-acetylneuraminate: step 5/5. In terms of biological role, catalyzes the reversible isomerization-deamination of glucosamine 6-phosphate (GlcN6P) to form fructose 6-phosphate (Fru6P) and ammonium ion. The protein is Glucosamine-6-phosphate deaminase of Leuconostoc citreum (strain KM20).